We begin with the raw amino-acid sequence, 617 residues long: Phosphatidylinositol-3,5-bisphosphate 3-phosphatase MTMR6 (617 aa).

Residues 1-101 (MEHIRTTKVE…YNSLLQLSKQ (101 aa)) form the GRAM domain. An interaction with RAB1B region spans residues 2-141 (EHIRTTKVEQ…AEYERMGVPN (140 aa)). At Tyr-108 the chain carries Phosphotyrosine. The Myotubularin phosphatase domain occupies 124 to 499 (GWQLIDLAAE…FNFKFWRNMY (376 aa)). Residues Asn-248, Asn-273, and Ile-274 each coordinate a 1,2-diacyl-sn-glycero-3-phospho-(1D-myo-inositol-3,5-bisphosphate). A 1,2-diacyl-sn-glycero-3-phospho-(1D-myo-inositol-3-phosphate) is bound by residues Asn-248, Asn-273, and Ile-274. Cys-336 serves as the catalytic Phosphocysteine intermediate. A 1,2-diacyl-sn-glycero-3-phospho-(1D-myo-inositol-3,5-bisphosphate) is bound by residues Ser-337, Asp-338, Gly-339, Trp-340, Asp-341, Arg-342, Lys-378, and Arg-382. A 1,2-diacyl-sn-glycero-3-phospho-(1D-myo-inositol-3-phosphate) is bound by residues Ser-337, Asp-338, Gly-339, Trp-340, Asp-341, and Arg-342. A 1,2-diacyl-sn-glycero-3-phospho-(1D-myo-inositol-3-phosphate) is bound at residue Arg-382. A phosphoserine mark is found at Ser-557, Ser-585, and Ser-607.

The protein belongs to the protein-tyrosine phosphatase family. Non-receptor class myotubularin subfamily. In terms of assembly, homodimer. Heterodimer (via C-terminus) with MTMR9 (via C-terminus). Interacts with ALKBH4. Interacts with KCNN4. Interacts (via GRAM domain) with RAB1B (in GDP-bound form); the interaction regulates MTMR6 recruitment to the endoplasmic reticulum-Golgi intermediate compartment. As to expression, isoform 1: Ubiquitously expressed including in heart, brain, spleen, lung, liver, muscle, kidney and testis (at protein level). Isoform 2: Expressed in testis (at protein level).

It is found in the cytoplasm. The protein localises to the endoplasmic reticulum-Golgi intermediate compartment. It localises to the cell projection. Its subcellular location is the ruffle membrane. The protein resides in the endoplasmic reticulum. It catalyses the reaction a 1,2-diacyl-sn-glycero-3-phospho-(1D-myo-inositol-3,5-bisphosphate) + H2O = a 1,2-diacyl-sn-glycero-3-phospho-(1D-myo-inositol-5-phosphate) + phosphate. The catalysed reaction is a 1,2-diacyl-sn-glycero-3-phospho-(1D-myo-inositol-3-phosphate) + H2O = a 1,2-diacyl-sn-glycero-3-phospho-(1D-myo-inositol) + phosphate. It carries out the reaction 1,2-dioctanoyl-sn-glycero-3-phospho-(1D-myo-inositol-3,5-bisphosphate) + H2O = 1,2-dioctanoyl-sn-glycero-3-phospho-(1D-myo-inositol-5-phosphate) + phosphate. The enzyme catalyses 1,2-dioctanoyl-sn-glycero-3-phospho-(1-D-myo-inositol-3-phosphate) + H2O = 1,2-dioctanoyl-sn-glycero-3-phospho-(1D-myo-inositol) + phosphate. Its activity is regulated as follows. Allosterically activated by phosphatidylserine and/or phosphatidylinositol 4-phosphate (PtdIns(4)P), and phosphatidylinositol 5-phosphate (PtdIns(5)P). Interaction with MTMR9 increases catalytic activity towards phosphatidylinositol 3,5-bisphosphate. Its function is as follows. Lipid phosphatase that specifically dephosphorylates the D-3 position of phosphatidylinositol 3-phosphate and phosphatidylinositol 3,5-bisphosphate, generating phosphatidylinositol and phosphatidylinositol 5-phosphate. Binds with high affinity to phosphatidylinositol 3,5-bisphosphate (PtdIns(3,5)P2) but also to phosphatidylinositol 3-phosphate (PtdIns(3)P), phosphatidylinositol 4-phosphate (PtdIns(4)P), and phosphatidylinositol 5-phosphate (PtdIns(5)P), phosphatidic acid and phosphatidylserine. Negatively regulates ER-Golgi protein transport. Probably in association with MTMR9, plays a role in the late stages of macropinocytosis by dephosphorylating phosphatidylinositol 3-phosphate in membrane ruffles. Acts as a negative regulator of KCNN4/KCa3.1 channel activity in CD4(+) T-cells possibly by decreasing intracellular levels of phosphatidylinositol 3-phosphate. Negatively regulates proliferation of reactivated CD4(+) T-cells. In complex with MTMR9, negatively regulates DNA damage-induced apoptosis. The formation of the MTMR6-MTMR9 complex stabilizes both MTMR6 and MTMR9 protein levels. This Mus musculus (Mouse) protein is Phosphatidylinositol-3,5-bisphosphate 3-phosphatase MTMR6.